A 379-amino-acid chain; its full sequence is Carbamoyl phosphate synthase small chain (379 aa).

Positions 1–189 are CPSase; that stretch reads MSKLALLVLE…GLPEAKDDSE (189 aa). L-glutamine contacts are provided by Ser47, Gly241, and Gly243. The Glutamine amidotransferase type-1 domain maps to 193–379; it reads HVVAYDFGAK…FIELIKKHSA (187 aa). Cys269 acts as the Nucleophile in catalysis. L-glutamine-binding residues include Leu270, Gln273, Asn311, Gly313, and Phe314. Catalysis depends on residues His353 and Glu355.

It belongs to the CarA family. As to quaternary structure, composed of two chains; the small (or glutamine) chain promotes the hydrolysis of glutamine to ammonia, which is used by the large (or ammonia) chain to synthesize carbamoyl phosphate. Tetramer of heterodimers (alpha,beta)4.

It catalyses the reaction hydrogencarbonate + L-glutamine + 2 ATP + H2O = carbamoyl phosphate + L-glutamate + 2 ADP + phosphate + 2 H(+). The catalysed reaction is L-glutamine + H2O = L-glutamate + NH4(+). It participates in amino-acid biosynthesis; L-arginine biosynthesis; carbamoyl phosphate from bicarbonate: step 1/1. Its pathway is pyrimidine metabolism; UMP biosynthesis via de novo pathway; (S)-dihydroorotate from bicarbonate: step 1/3. In terms of biological role, small subunit of the glutamine-dependent carbamoyl phosphate synthetase (CPSase). CPSase catalyzes the formation of carbamoyl phosphate from the ammonia moiety of glutamine, carbonate, and phosphate donated by ATP, constituting the first step of 2 biosynthetic pathways, one leading to arginine and/or urea and the other to pyrimidine nucleotides. The small subunit (glutamine amidotransferase) binds and cleaves glutamine to supply the large subunit with the substrate ammonia. The chain is Carbamoyl phosphate synthase small chain from Vibrio parahaemolyticus serotype O3:K6 (strain RIMD 2210633).